The primary structure comprises 82 residues: uncharacterized protein (82 aa).

A compositionally biased stretch (polar residues) spans Asp-55–Ser-64. Positions Asp-55 to Asn-82 are disordered.

This is an uncharacterized protein from Dictyostelium discoideum (Social amoeba).